The primary structure comprises 362 residues: MSTASVMDLVRDDLRAFAGYASARTSALQGDVWLNANESAWGNPADPDASTRRYPDPQPKGLRAALAQLYGCATEQLLIGRGSDEAIDLLVRGLCVPERDAVVVTPPVFGMYAVCARLQSAPLVEVPLVDGADGLHADVPAIVQAALDAKAKLVFLCSPSNPAGSAIPLAEIEAALQALQGKAVVVVDEAYGEFSDVPSAIGLLARYDNLAVLRTLSKAHALAAARIGSLIANAELIALLRRCQAPYPVPTPCAVMAEQALSAPALAVTQRRVTEIRAERARLHAALVQVAGVRQVYPSQGNFLLVRFDDAEAAFQALLEAGVVVRDQRAVPRLSDALRITIGTPDQNDRVLGALQRKQEAA.

Lysine 218 bears the N6-(pyridoxal phosphate)lysine mark.

The protein belongs to the class-II pyridoxal-phosphate-dependent aminotransferase family. Histidinol-phosphate aminotransferase subfamily. Homodimer. Pyridoxal 5'-phosphate serves as cofactor.

It carries out the reaction L-histidinol phosphate + 2-oxoglutarate = 3-(imidazol-4-yl)-2-oxopropyl phosphate + L-glutamate. The protein operates within amino-acid biosynthesis; L-histidine biosynthesis; L-histidine from 5-phospho-alpha-D-ribose 1-diphosphate: step 7/9. The polypeptide is Histidinol-phosphate aminotransferase (Xanthomonas campestris pv. campestris (strain ATCC 33913 / DSM 3586 / NCPPB 528 / LMG 568 / P 25)).